Reading from the N-terminus, the 433-residue chain is Transcription factor elt-2 (433 aa).

2 disordered regions span residues 1–47 and 194–235; these read MDNN…ELPR and GQPP…RQGL. The segment covering 27-43 has biased composition (polar residues); that stretch reads PTQNMDPPEQNNESQLS. Residues 211-234 show a composition bias toward low complexity; that stretch reads AKQSSKKSSSSNRGSNGSASRRQG. Residues 237–261 form a GATA-type zinc finger; it reads CSNCNGTNTTLWRRNAEGDPVCNAC. A disordered region spans residues 275–332; sequence SMKKEGALQTRKRKSKSGDSSTPSTSRARERKFERASSSTEKAQRSSNRRAGSAKADR. Positions 310 to 324 are enriched in polar residues; that stretch reads ASSSTEKAQRSSNRR.

Interacts with lag-1. Interacts with pha-4. Interacts with rpt-6. May be ubiquitinated in response to infection by B.pseudomallei. Expressed in the intestine.

It localises to the nucleus. Transcriptional activator that binds to the consensus sequence 5'-[AT]GATA[AG]-3'. Predominantly directs the transcription of intestinal genes such as ges-1, cpr-6, pho-1, ftn-1, vit-2 and lev-11, and itself. Required for gut-specific differentiation, specifically acting with the GATA region-binding transcription factor elt-7 to control normal gene expression and promote normal formation of the intestine. Regulates intestinal gene expression in response to hypoxia to promote longevity. Modulation of longevity may, in part, be the result of regulation of expression of daf-16 isoforms d and f in the intestine. Regulates tissue specific gene expression at basal levels and in response to bacterial infection in the intestine to control innate immunity. Plays a role in the induction of metal-responsive genes, activating gene expression from zinc-activated promoters and iron-dependent promoters and enhancers. May regulate the expression of genes that control sensitivity to oxidative stress, in a mab-3-dependent manner, and osmotic stress, in conjunction with the GATA region-binding transcription factor elt-3. May play a role in sphingolipid signaling by regulating the expression of the sphingosine-1-phosphate degrading enzyme, sphingosine-1-phosphate lyase. May act with the Notch signaling pathway to promote endodermal gene expression. Has a protective role in response to infection by Gram-negative bacteria such as S.enterica, E.coli, P.aeruginosa and B.pseudomallei, Gram-positive bacterium E.faecalis and fungal pathogen C.neoformans. An association with the 26S proteasome regulatory subunit rpt-6, in part, controls gene expression in response to infection by P.aeruginosa. Regulates gene expression during the recovery phase following a bacterial infection. May act with p38-activated transcription factors to control p38 gene induction in response to bacterial infection. Controls lysosome formation in the intestine by controlling lysosomal gene expression. This Caenorhabditis elegans protein is Transcription factor elt-2.